A 371-amino-acid polypeptide reads, in one-letter code: UDP-N-acetylglucosamine--N-acetylmuramyl-(pentapeptide) pyrophosphoryl-undecaprenol N-acetylglucosamine transferase (371 aa).

UDP-N-acetyl-alpha-D-glucosamine is bound by residues 15–17 (TGG), Asn126, Arg172, Ser199, Ile256, 275–280 (ALTVSE), and Gln301.

The protein belongs to the glycosyltransferase 28 family. MurG subfamily.

It localises to the cell inner membrane. The enzyme catalyses di-trans,octa-cis-undecaprenyl diphospho-N-acetyl-alpha-D-muramoyl-L-alanyl-D-glutamyl-meso-2,6-diaminopimeloyl-D-alanyl-D-alanine + UDP-N-acetyl-alpha-D-glucosamine = di-trans,octa-cis-undecaprenyl diphospho-[N-acetyl-alpha-D-glucosaminyl-(1-&gt;4)]-N-acetyl-alpha-D-muramoyl-L-alanyl-D-glutamyl-meso-2,6-diaminopimeloyl-D-alanyl-D-alanine + UDP + H(+). Its pathway is cell wall biogenesis; peptidoglycan biosynthesis. Cell wall formation. Catalyzes the transfer of a GlcNAc subunit on undecaprenyl-pyrophosphoryl-MurNAc-pentapeptide (lipid intermediate I) to form undecaprenyl-pyrophosphoryl-MurNAc-(pentapeptide)GlcNAc (lipid intermediate II). The protein is UDP-N-acetylglucosamine--N-acetylmuramyl-(pentapeptide) pyrophosphoryl-undecaprenol N-acetylglucosamine transferase of Francisella tularensis subsp. holarctica (strain FTNF002-00 / FTA).